Consider the following 225-residue polypeptide: Large ribosomal subunit protein eL15 (225 aa).

The segment at 159 to 180 is disordered; the sequence is RPFRGLTSAGKKMRGLRKSRGL. Basic residues predominate over residues 169-180; that stretch reads KKMRGLRKSRGL.

The protein belongs to the eukaryotic ribosomal protein eL15 family.

The chain is Large ribosomal subunit protein eL15 (rpl15e) from Aeropyrum pernix (strain ATCC 700893 / DSM 11879 / JCM 9820 / NBRC 100138 / K1).